The chain runs to 310 residues: tRNA uridine(34) hydroxylase (310 aa).

The Rhodanese domain maps to 124–218; that stretch reads SDPEVLLIDT…YFEEVPQEES (95 aa). The Cysteine persulfide intermediate role is filled by Cys178.

The protein belongs to the TrhO family.

The catalysed reaction is uridine(34) in tRNA + AH2 + O2 = 5-hydroxyuridine(34) in tRNA + A + H2O. Its function is as follows. Catalyzes oxygen-dependent 5-hydroxyuridine (ho5U) modification at position 34 in tRNAs. This Pseudomonas putida (strain GB-1) protein is tRNA uridine(34) hydroxylase.